A 140-amino-acid chain; its full sequence is MALRLGLFLIWAGVSMFLQLDPVNGDEQLSEDNVILPKEKKDPASGAETKDNKCVFPFIYGNKKYFDCTLHGSLFLWCSLDADYTGRWKYCTKNDYAKCVFPFIYEGKSYDTCIIIGSTFMNYWCSLSSNYDEDGVWKYC.

The N-terminal stretch at 1–25 (MALRLGLFLIWAGVSMFLQLDPVNG) is a signal peptide. Fibronectin type-II domains are found at residues 49–93 (TKDN…YCTK) and 94–140 (NDYA…WKYC). Cystine bridges form between Cys-54–Cys-78, Cys-68–Cys-91, Cys-99–Cys-125, and Cys-113–Cys-140.

The protein belongs to the seminal plasma protein family.

Its subcellular location is the secreted. Its function is as follows. The BSP-A proteins from seminal plasma exhibit both simulatory and inhibitory actions on the release of pituitary gonadotropins. The exact function of these proteins is not known. In Bos taurus (Bovine), this protein is Seminal plasma protein A3.